A 160-amino-acid polypeptide reads, in one-letter code: Putative tRNA (cytidine(34)-2'-O)-methyltransferase (160 aa).

S-adenosyl-L-methionine is bound by residues isoleucine 82, glycine 107, leucine 128, and serine 136.

Belongs to the class IV-like SAM-binding methyltransferase superfamily. RNA methyltransferase TrmH family. TrmL subfamily.

The protein localises to the cytoplasm. It carries out the reaction cytidine(34) in tRNA + S-adenosyl-L-methionine = 2'-O-methylcytidine(34) in tRNA + S-adenosyl-L-homocysteine + H(+). It catalyses the reaction 5-carboxymethylaminomethyluridine(34) in tRNA(Leu) + S-adenosyl-L-methionine = 5-carboxymethylaminomethyl-2'-O-methyluridine(34) in tRNA(Leu) + S-adenosyl-L-homocysteine + H(+). Functionally, could methylate the ribose at the nucleotide 34 wobble position in tRNA. This Bacillus subtilis (strain 168) protein is Putative tRNA (cytidine(34)-2'-O)-methyltransferase (cspR).